The primary structure comprises 1138 residues: Protein RECOGNITION OF PERONOSPORA PARASITICA 7 (1138 aa).

The NB-ARC domain occupies glutamate 166–glutamate 422. An ATP-binding site is contributed by glycine 189 to threonine 196. LRR repeat units follow at residues glutamine 544–valine 565, valine 566–leucine 581, glutamate 582–leucine 606, isoleucine 607–leucine 631, methionine 655–lysine 680, leucine 681–threonine 705, threonine 707–leucine 726, lysine 727–phenylalanine 752, histidine 754–proline 774, serine 775–lysine 797, leucine 798–glutamine 825, methionine 847–serine 871, leucine 873–leucine 893, valine 894–glutamine 918, methionine 940–glutamine 963, leucine 1028–cysteine 1050, phenylalanine 1055–methionine 1078, proline 1079–tyrosine 1103, and lysine 1115–aspartate 1138.

This sequence belongs to the disease resistance NB-LRR family.

Disease resistance protein required for incompatible interactions with avirulent strains of Hyaloperonospora arabidopsidis (downy mildew), isolate Hpa-Hiks1 in cv. Columbia. The sequence is that of Protein RECOGNITION OF PERONOSPORA PARASITICA 7 from Arabidopsis thaliana (Mouse-ear cress).